A 244-amino-acid polypeptide reads, in one-letter code: tRNA (guanine-N(1)-)-methyltransferase (244 aa).

Residues Gly-113 and 133 to 138 (IGDYVL) each bind S-adenosyl-L-methionine.

It belongs to the RNA methyltransferase TrmD family. As to quaternary structure, homodimer.

The protein localises to the cytoplasm. The catalysed reaction is guanosine(37) in tRNA + S-adenosyl-L-methionine = N(1)-methylguanosine(37) in tRNA + S-adenosyl-L-homocysteine + H(+). Functionally, specifically methylates guanosine-37 in various tRNAs. The chain is tRNA (guanine-N(1)-)-methyltransferase from Bacillus cereus (strain G9842).